A 382-amino-acid chain; its full sequence is Glycerate kinase (382 aa).

This sequence belongs to the glycerate kinase type-1 family.

The catalysed reaction is (R)-glycerate + ATP = (2R)-3-phosphoglycerate + ADP + H(+). In Bacillus subtilis (strain 168), this protein is Glycerate kinase (glxK).